The primary structure comprises 301 residues: Cilia- and flagella-associated protein 161 (301 aa).

Positions 269-301 (GNPRDASSSMLDLPKPPTEDTRAMEQAMGLDTQ) are disordered.

As to quaternary structure, microtubule inner protein component of sperm flagellar doublet microtubules. In terms of tissue distribution, expressed in airway epithelial cells.

The protein resides in the cytoplasm. The protein localises to the cytoskeleton. Its subcellular location is the cilium axoneme. It localises to the flagellum axoneme. Microtubule inner protein (MIP) part of the dynein-decorated doublet microtubules (DMTs) in cilia axoneme, which is required for motile cilia beating. In Homo sapiens (Human), this protein is Cilia- and flagella-associated protein 161.